The primary structure comprises 119 residues: Putative nitrilase-like protein YIL165C (119 aa).

One can recognise a CN hydrolase domain in the interval 1–82 (MKNIAYEGRL…EGLLTAEINT (82 aa)). The active-site Proton acceptor is the Asp21.

It belongs to the carbon-nitrogen hydrolase superfamily. Nitrilase family.

This Saccharomyces cerevisiae (strain ATCC 204508 / S288c) (Baker's yeast) protein is Putative nitrilase-like protein YIL165C.